A 432-amino-acid chain; its full sequence is Amino-acid acetyltransferase (432 aa).

Positions 286–425 (ELVREAAIED…ASLYNFQRNS (140 aa)) constitute an N-acetyltransferase domain.

This sequence belongs to the acetyltransferase family. ArgA subfamily.

The protein resides in the cytoplasm. It catalyses the reaction L-glutamate + acetyl-CoA = N-acetyl-L-glutamate + CoA + H(+). Its pathway is amino-acid biosynthesis; L-arginine biosynthesis; N(2)-acetyl-L-ornithine from L-glutamate: step 1/4. The sequence is that of Amino-acid acetyltransferase from Pseudomonas syringae pv. tomato (strain ATCC BAA-871 / DC3000).